Consider the following 338-residue polypeptide: Putative acyl-[acyl-carrier-protein] desaturase DesA1 (338 aa).

Fe cation-binding residues include Glu-76, Glu-107, His-110, Glu-167, Glu-197, and His-200. A compositionally biased stretch (basic and acidic residues) spans 314 to 328 (EARTGKKVSAHELHK). The disordered stretch occupies residues 314–338 (EARTGKKVSAHELHKTAGKLAMSRR).

The protein belongs to the fatty acid desaturase type 2 family. Homodimer. Requires Fe(2+) as cofactor.

The protein resides in the cell surface. It functions in the pathway lipid metabolism; fatty acid metabolism. Its function is as follows. May be a desaturase involved in mycobacterial fatty acid biosynthesis. This is Putative acyl-[acyl-carrier-protein] desaturase DesA1 (desA1) from Mycobacterium tuberculosis (strain CDC 1551 / Oshkosh).